The primary structure comprises 304 residues: HTH-type transcriptional regulator BenM (304 aa).

The HTH lysR-type domain occupies 1–58; that stretch reads MELRHLRYFVAVVEEQSFTKAADKLCIAQPPLSRQIQNLEEELGIQLLERGSRPVKTT. The H-T-H motif DNA-binding region spans 18–37; it reads FTKAADKLCIAQPPLSRQIQ. Residues Ser-99 and Leu-104 each contribute to the benzoate site. Position 99 (Ser-99) interacts with cis,cis-muconate. Thr-128 lines the cis,cis-muconate pocket. The benzoate site is built by Phe-144, Arg-160, and Asn-202. Phe-203 is a cis,cis-muconate binding site. Tyr-293 contacts benzoate.

Belongs to the LysR transcriptional regulatory family. As to quaternary structure, homotetramer; dimer of dimers. The dimers can also associate to form linear, higher oligomers (in vitro).

In terms of biological role, positive regulator of the ben and cat genes for benzoate degradation. BenM is necessary for ben gene expression but not for expression of the cat genes, which can be regulated by CatM. Binds to the inducers cis,cis-muconate and benzoate. This chain is HTH-type transcriptional regulator BenM (benM), found in Acinetobacter baylyi (strain ATCC 33305 / BD413 / ADP1).